The primary structure comprises 538 residues: L-aspartate oxidase (538 aa).

Residues 14 to 17 (SGAA), lysine 36, 43 to 50 (STYWAQGG), and aspartate 223 each bind FAD. The active-site Proton donor/acceptor is arginine 290. FAD-binding positions include glutamate 375 and 391-392 (SL).

It belongs to the FAD-dependent oxidoreductase 2 family. NadB subfamily. FAD serves as cofactor.

It is found in the cytoplasm. It catalyses the reaction L-aspartate + O2 = iminosuccinate + H2O2. It functions in the pathway cofactor biosynthesis; NAD(+) biosynthesis; iminoaspartate from L-aspartate (oxidase route): step 1/1. Its function is as follows. Catalyzes the oxidation of L-aspartate to iminoaspartate, the first step in the de novo biosynthesis of NAD(+). The protein is L-aspartate oxidase (nadB) of Pseudomonas aeruginosa (strain ATCC 15692 / DSM 22644 / CIP 104116 / JCM 14847 / LMG 12228 / 1C / PRS 101 / PAO1).